The chain runs to 1571 residues: MTSVEKVSILGAETIHVGYGIQDHIVQEVISHLASSTYVIVTDTNMARTTPFTKLRNKFESKLKELRPESRLLFYSVSPGENNKNRETKAAVEDFLLQQGCTRDTVILAVGGGVIGDMIGFVAATFMRGVRVVQVPTSLLAMVDSSVGGKTAIDTPLGKNFVGAFHQPEYVFADVSFLETLPTRQFINGMAEVVKTAAIWNEEEFTRLEKFSKKFLAVVSAKTPDLISIKEELVKTVLESIRVKAFVVSSDEKETGLRNLLNFGHTIGHAIEAVLTPQALHGECVSIGMIKEAELARYLGVLSPVAVARLSKCLVAYGLPVSIDEKDFLKKVGNKRHNVEIDILLKKMAIDKKNDGSKIRCVILEAIGKCYQLKAHQVSKQDLSFVLTDEVLVHPFDDKLIPKTNVVIPPGSKSISNRALVLAALGTGTVRIKNLLHSDDTKHMLEAVASLKGASISTEDNGETIVVTGNGGKLVSCDEQLYLGNAGTASRFLTSVAPLVGINPQSGEHVVLTGNARMQERPIGPLVDALRANGSEIDYLNKEGSLPLKVKAGKGLNGGRIELAATISSQYVSSILMCAPYANEPVTLSLVGGKPISQLYINMTIAMMKTFGIVVTKSETEEHTYHIPRGSYVNPKEYVIESDASSATYPLAFAALTGTSCTIPNIGSSSLQGDARFAVDVLRPMGCEVVQTATSTTVTGPSVGNLKPLPHVDMEPMTDAFLTASVVAAVAKNGTQSTSITGIANQRVKECNRIAAMVSELAKFGVVANELPDGIEIHGISPNDLVTPSTEKRGIKTFDDHRVAMSFSLLAGLCKDKVLIQERSCTGKTWPGWWDILHTKFKVAIDGYELPLQHEDSTALVEKHGNGKRSIIVIGMRGAGKSTLSKWMASFLGFKLVDLDDVLEEKIGTDIRSFVQQQGWEEFRKQEAIVAKESFIKFSEGCVLSTGGGIVEGEEARESLKSYVKSGGIVLHLHRDLDETVVLLSADTTRPAYVDEIKQVWLRRENWYRECSNYHFYSAHCSSDAEFKHLRNSFTTYIKTITGFHVAQIPKKRSFYTSLTFSDLTEVASSLEDISTGSDAIELRVDLLKETTHTFVADQTAILRKSTNLPIIYTIRTESQGGKFPDNKFEELEELLALGIKLGVQYLDLQLDLPNDLLERILESKKFTKIIASYVDVSGSLRWDNVEWKNRYNQGVSLGADLVKLVGRANSFQDNLSLEVFRGTSTLKPLIAYNVGEKGKLSRVLNPRLTPVTHAKIPAESGNEGALDVAQINKAYTDIGGLSEKHFWIVGNPVGHSRSPNLHNAGYKKLNLPYVFDRFETSDAGEAFQKLIKEDKNFGGLAVTMPLKVDIMKYTDKLSDSAQVIGAVNTVIELEGEQGKYLGENTDWVGISESFVRDGIPNLENVNVNGLVVGGGGTSRAAVYALHQLGCKKIYMLNRTVSKIQEIQKNFPAEYNIEILDSVEAVEAAQPISLIVSCIPADKPIDEQLLNKLERVLYVGGEAKIGGFTPSLLEASYKPRVTPIMKIASEKYEWNVIPGVEMLVNQGITQFQLHTGFVAPYDVVHDAVVNQ.

The 3-dehydroquinate synthase stretch occupies residues 1-380 (MTSVEKVSIL…YQLKAHQVSK (380 aa)). NAD(+) contacts are provided by residues 43–45 (DTN), 81–84 (ENNK), 112–114 (GGV), and Asp117. Arg128 is a binding site for 7-phospho-2-dehydro-3-deoxy-D-arabino-heptonate. NAD(+) is bound at residue 137–138 (TS). Residues Asp144 and Lys150 each contribute to the 7-phospho-2-dehydro-3-deoxy-D-arabino-heptonate site. Lys159 is a binding site for NAD(+). Asn160 is a binding site for 7-phospho-2-dehydro-3-deoxy-D-arabino-heptonate. Residues 177-180 (FLET) and Asn188 contribute to the NAD(+) site. Glu192 lines the Zn(2+) pocket. 7-phospho-2-dehydro-3-deoxy-D-arabino-heptonate is bound by residues 192 to 195 (EVVK) and Lys244. The active-site Proton acceptor; for 3-dehydroquinate synthase activity is the Glu254. 7-phospho-2-dehydro-3-deoxy-D-arabino-heptonate-binding positions include 258 to 262 (RNLLN) and His265. His265 lines the Zn(2+) pocket. His269 (proton acceptor; for 3-dehydroquinate synthase activity) is an active-site residue. His281 and Lys352 together coordinate 7-phospho-2-dehydro-3-deoxy-D-arabino-heptonate. Zn(2+) is bound at residue His281. The segment at 393-843 (VHPFDDKLIP…WDILHTKFKV (451 aa)) is EPSP synthase. Catalysis depends on Cys825, which acts as the For EPSP synthase activity. The tract at residues 868 to 1058 (KRSIIVIGMR…IPKKRSFYTS (191 aa)) is shikimate kinase. Residue 875 to 882 (GMRGAGKS) participates in ATP binding. The tract at residues 1059 to 1271 (LTFSDLTEVA…GNEGALDVAQ (213 aa)) is 3-dehydroquinase. Residue Lys1204 is the Schiff-base intermediate with substrate; for 3-dehydroquinate dehydratase activity of the active site. The segment at 1284-1571 (EKHFWIVGNP…DVVHDAVVNQ (288 aa)) is shikimate dehydrogenase.

This sequence in the N-terminal section; belongs to the sugar phosphate cyclases superfamily. Dehydroquinate synthase family. It in the 2nd section; belongs to the EPSP synthase family. The protein in the 3rd section; belongs to the shikimate kinase family. In the 4th section; belongs to the type-I 3-dehydroquinase family. This sequence in the C-terminal section; belongs to the shikimate dehydrogenase family. Homodimer. Zn(2+) is required as a cofactor.

Its subcellular location is the cytoplasm. The catalysed reaction is 7-phospho-2-dehydro-3-deoxy-D-arabino-heptonate = 3-dehydroquinate + phosphate. It catalyses the reaction 3-dehydroquinate = 3-dehydroshikimate + H2O. It carries out the reaction shikimate + NADP(+) = 3-dehydroshikimate + NADPH + H(+). The enzyme catalyses shikimate + ATP = 3-phosphoshikimate + ADP + H(+). The catalysed reaction is 3-phosphoshikimate + phosphoenolpyruvate = 5-O-(1-carboxyvinyl)-3-phosphoshikimate + phosphate. The protein operates within metabolic intermediate biosynthesis; chorismate biosynthesis; chorismate from D-erythrose 4-phosphate and phosphoenolpyruvate: step 2/7. It functions in the pathway metabolic intermediate biosynthesis; chorismate biosynthesis; chorismate from D-erythrose 4-phosphate and phosphoenolpyruvate: step 3/7. It participates in metabolic intermediate biosynthesis; chorismate biosynthesis; chorismate from D-erythrose 4-phosphate and phosphoenolpyruvate: step 4/7. Its pathway is metabolic intermediate biosynthesis; chorismate biosynthesis; chorismate from D-erythrose 4-phosphate and phosphoenolpyruvate: step 5/7. The protein operates within metabolic intermediate biosynthesis; chorismate biosynthesis; chorismate from D-erythrose 4-phosphate and phosphoenolpyruvate: step 6/7. Functionally, the AROM polypeptide catalyzes 5 consecutive enzymatic reactions in prechorismate polyaromatic amino acid biosynthesis. The sequence is that of Pentafunctional AROM polypeptide from Scheffersomyces stipitis (strain ATCC 58785 / CBS 6054 / NBRC 10063 / NRRL Y-11545) (Yeast).